Reading from the N-terminus, the 301-residue chain is N-acetylmuramic acid 6-phosphate etherase (301 aa).

Residues 57–220 (IAETFMKNGR…TTGAMIKTGK (164 aa)) enclose the SIS domain. The active-site Proton donor is Glu-85. Glu-116 is an active-site residue.

It belongs to the GCKR-like family. MurNAc-6-P etherase subfamily. In terms of assembly, homodimer.

It catalyses the reaction N-acetyl-D-muramate 6-phosphate + H2O = N-acetyl-D-glucosamine 6-phosphate + (R)-lactate. Its pathway is amino-sugar metabolism; 1,6-anhydro-N-acetylmuramate degradation. It participates in amino-sugar metabolism; N-acetylmuramate degradation. It functions in the pathway cell wall biogenesis; peptidoglycan recycling. Specifically catalyzes the cleavage of the D-lactyl ether substituent of MurNAc 6-phosphate, producing GlcNAc 6-phosphate and D-lactate. Together with AnmK, is also required for the utilization of anhydro-N-acetylmuramic acid (anhMurNAc) either imported from the medium or derived from its own cell wall murein, and thus plays a role in cell wall recycling. The chain is N-acetylmuramic acid 6-phosphate etherase from Pasteurella multocida (strain Pm70).